A 379-amino-acid polypeptide reads, in one-letter code: Cytochrome b (379 aa).

Helical transmembrane passes span 33-53, 77-98, 113-133, and 178-198; these read FGSL…FLAM, WLIR…FIHV, WNIG…GYVL, and FFAF…VHLL. Heme b is bound by residues His83 and His97. Residues His182 and His196 each contribute to the heme b site. His201 contacts a ubiquinone. 4 helical membrane-spanning segments follow: residues 226–246, 288–308, 320–340, and 347–367; these read TKDL…ALFF, LGGV…PLLN, VTQV…WIGG, and FTMI…ILMP.

The protein belongs to the cytochrome b family. As to quaternary structure, the cytochrome bc1 complex contains 11 subunits: 3 respiratory subunits (MT-CYB, CYC1 and UQCRFS1), 2 core proteins (UQCRC1 and UQCRC2) and 6 low-molecular weight proteins (UQCRH/QCR6, UQCRB/QCR7, UQCRQ/QCR8, UQCR10/QCR9, UQCR11/QCR10 and a cleavage product of UQCRFS1). This cytochrome bc1 complex then forms a dimer. Heme b is required as a cofactor.

It localises to the mitochondrion inner membrane. In terms of biological role, component of the ubiquinol-cytochrome c reductase complex (complex III or cytochrome b-c1 complex) that is part of the mitochondrial respiratory chain. The b-c1 complex mediates electron transfer from ubiquinol to cytochrome c. Contributes to the generation of a proton gradient across the mitochondrial membrane that is then used for ATP synthesis. This is Cytochrome b (MT-CYB) from Akodon fumeus (Smoky grass mouse).